We begin with the raw amino-acid sequence, 250 residues long: ATTRCDPTLIPIAGGWFELLEGGEALRYRCPPGHIPTPLARRSCGPDGQXEPLXXXXXXXXXXXXXXXXKCRAVWCPPPQDMEHGSFWPRLPRYPPGSRLHFQCFQGFNLRGAPNRTCGEGGRWSGVTPVCDDGSGDCPAPPVXXXXXKEGSRYLLEDTVRFRCGPGLVLLGSAVRQCLEGGVWSGTEPQCRAPLSFDTPSDVAASFMASLSQSVERADSNSSHGPTEKLPRXIRVDGSAXLNVFLLXDA.

Sushi domains follow at residues T3 to A73, V74 to D133, and G136 to A193. Disulfide bonds link C5-C44, C30-C71, C76-C118, C104-C131, C138-C178, and C164-C191. A glycan (N-linked (GlcNAc...) asparagine) is linked at N115. A glycan (N-linked (GlcNAc...) asparagine) is linked at N221.

This sequence belongs to the peptidase S1 family. Plasma.

Its subcellular location is the secreted. Its function is as follows. Required in both the classical and alternate pathways of the complement system. This Gallus gallus (Chicken) protein is Complement factor B-like protease.